The primary structure comprises 283 residues: Acetylglutamate kinase (283 aa).

Substrate-binding positions include 63-64 (GG), arginine 85, and asparagine 178.

The protein belongs to the acetylglutamate kinase family. ArgB subfamily.

It localises to the cytoplasm. It catalyses the reaction N-acetyl-L-glutamate + ATP = N-acetyl-L-glutamyl 5-phosphate + ADP. It participates in amino-acid biosynthesis; L-arginine biosynthesis; N(2)-acetyl-L-ornithine from L-glutamate: step 2/4. In terms of biological role, catalyzes the ATP-dependent phosphorylation of N-acetyl-L-glutamate. The sequence is that of Acetylglutamate kinase from Prochlorococcus marinus (strain MIT 9301).